The sequence spans 229 residues: Small ribosomal subunit protein mS23 (229 aa).

It belongs to the mitochondrion-specific ribosomal protein mS23 family. In terms of assembly, component of the mitochondrial small ribosomal subunit.

Its subcellular location is the mitochondrion. The chain is Small ribosomal subunit protein mS23 (RSM25) from Yarrowia lipolytica (strain CLIB 122 / E 150) (Yeast).